The sequence spans 256 residues: Thiazole synthase (256 aa).

Lys-98 acts as the Schiff-base intermediate with DXP in catalysis. Residues Gly-159, 185–186 (AG), and 207–208 (NT) each bind 1-deoxy-D-xylulose 5-phosphate.

It belongs to the ThiG family. As to quaternary structure, homotetramer. Forms heterodimers with either ThiH or ThiS.

The protein resides in the cytoplasm. It catalyses the reaction [ThiS sulfur-carrier protein]-C-terminal-Gly-aminoethanethioate + 2-iminoacetate + 1-deoxy-D-xylulose 5-phosphate = [ThiS sulfur-carrier protein]-C-terminal Gly-Gly + 2-[(2R,5Z)-2-carboxy-4-methylthiazol-5(2H)-ylidene]ethyl phosphate + 2 H2O + H(+). It participates in cofactor biosynthesis; thiamine diphosphate biosynthesis. In terms of biological role, catalyzes the rearrangement of 1-deoxy-D-xylulose 5-phosphate (DXP) to produce the thiazole phosphate moiety of thiamine. Sulfur is provided by the thiocarboxylate moiety of the carrier protein ThiS. In vitro, sulfur can be provided by H(2)S. In Aliivibrio salmonicida (strain LFI1238) (Vibrio salmonicida (strain LFI1238)), this protein is Thiazole synthase.